A 229-amino-acid polypeptide reads, in one-letter code: Potassium/proton antiporter CemA (229 aa).

The next 3 helical transmembrane spans lie at 6–26, 107–127, and 189–209; these read AFIP…ISLC, ILHF…SFWG, and ILSG…KYWI.

It belongs to the CemA family.

Its subcellular location is the plastid. The protein resides in the chloroplast inner membrane. It catalyses the reaction K(+)(in) + H(+)(out) = K(+)(out) + H(+)(in). Contributes to K(+)/H(+) antiport activity by supporting proton efflux to control proton extrusion and homeostasis in chloroplasts in a light-dependent manner to modulate photosynthesis. Prevents excessive induction of non-photochemical quenching (NPQ) under continuous-light conditions. Indirectly promotes efficient inorganic carbon uptake into chloroplasts. This is Potassium/proton antiporter CemA from Olimarabidopsis pumila (Dwarf rocket).